The primary structure comprises 284 residues: Tropomyosin (284 aa).

Residues 1–47 (MDAIKKKMQAMKIEKDNAMDRADAAEEKARQQQERVEKLEEELRDTQ) are disordered. The stretch at 1-284 (MDAIKKKMQA…DQTFQELSGY (284 aa)) forms a coiled coil. The span at 12-38 (KIEKDNAMDRADAAEEKARQQQERVEK) shows a compositional bias: basic and acidic residues.

This sequence belongs to the tropomyosin family. In terms of assembly, homodimer.

In terms of biological role, tropomyosin, in association with the troponin complex, plays a central role in the calcium dependent regulation of muscle contraction. In Trichinella pseudospiralis (Parasitic roundworm), this protein is Tropomyosin.